The chain runs to 812 residues: DNA translocase FtsK 1 (812 aa).

Residues Met-1–Lys-11 are compositionally biased toward basic residues. The disordered stretch occupies residues Met-1–Val-36. Residues Lys-25–Val-36 show a composition bias toward basic and acidic residues. 5 consecutive transmembrane segments (helical) span residues Ile-63 to Ile-83, Val-116 to Leu-136, Ile-156 to Leu-176, Leu-184 to Leu-204, and Leu-210 to Leu-230. Topologically, residues Glu-231–Leu-812 are cytoplasmic. The FtsK domain maps to Gly-461–Arg-670. Gly-481–Val-486 is a binding site for ATP.

The protein belongs to the FtsK/SpoIIIE/SftA family. In terms of assembly, homohexamer. Forms a ring that surrounds DNA.

It localises to the cell inner membrane. Essential cell division protein that coordinates cell division and chromosome segregation. The N-terminus is involved in assembly of the cell-division machinery. The C-terminus functions as a DNA motor that moves dsDNA in an ATP-dependent manner towards the dif recombination site, which is located within the replication terminus region. Translocation stops specifically at Xer-dif sites, where FtsK interacts with the Xer recombinase, allowing activation of chromosome unlinking by recombination. FtsK orienting polar sequences (KOPS) guide the direction of DNA translocation. FtsK can remove proteins from DNA as it translocates, but translocation stops specifically at XerCD-dif site, thereby preventing removal of XerC and XerD from dif. The protein is DNA translocase FtsK 1 (ftsK1) of Neisseria meningitidis serogroup B (strain ATCC BAA-335 / MC58).